The chain runs to 266 residues: NAD kinase 2 (266 aa).

Asp51 serves as the catalytic Proton acceptor. NAD(+) contacts are provided by residues 51 to 52 (DG), 123 to 124 (NE), Arg150, Asp152, 163 to 168 (TGYSKS), and Ala187.

Belongs to the NAD kinase family. It depends on a divalent metal cation as a cofactor.

The protein localises to the cytoplasm. The enzyme catalyses NAD(+) + ATP = ADP + NADP(+) + H(+). In terms of biological role, involved in the regulation of the intracellular balance of NAD and NADP, and is a key enzyme in the biosynthesis of NADP. Catalyzes specifically the phosphorylation on 2'-hydroxyl of the adenosine moiety of NAD to yield NADP. The chain is NAD kinase 2 from Oceanobacillus iheyensis (strain DSM 14371 / CIP 107618 / JCM 11309 / KCTC 3954 / HTE831).